The sequence spans 651 residues: DNA mismatch repair protein MutL (651 aa).

Positions 383–405 (TAAEEPTPAPTSPDLEIGDLDDQ) are disordered.

It belongs to the DNA mismatch repair MutL/HexB family.

Its function is as follows. This protein is involved in the repair of mismatches in DNA. It is required for dam-dependent methyl-directed DNA mismatch repair. May act as a 'molecular matchmaker', a protein that promotes the formation of a stable complex between two or more DNA-binding proteins in an ATP-dependent manner without itself being part of a final effector complex. The polypeptide is DNA mismatch repair protein MutL (Lacticaseibacillus casei (strain BL23) (Lactobacillus casei)).